Consider the following 265-residue polypeptide: Undecaprenyl-diphosphatase (265 aa).

8 helical membrane-spanning segments follow: residues 1-21 (MDFL…FLPI), 39-59 (QGVG…ILYF), 87-107 (WAVV…LDYI), 110-130 (ALRA…LLAA), 144-164 (IGFK…IPGT), 187-207 (FSFF…LLTI), 217-237 (LGFL…IHFF), and 244-264 (FGMW…YLLF).

It belongs to the UppP family.

It localises to the cell inner membrane. It carries out the reaction di-trans,octa-cis-undecaprenyl diphosphate + H2O = di-trans,octa-cis-undecaprenyl phosphate + phosphate + H(+). In terms of biological role, catalyzes the dephosphorylation of undecaprenyl diphosphate (UPP). Confers resistance to bacitracin. The sequence is that of Undecaprenyl-diphosphatase from Idiomarina loihiensis (strain ATCC BAA-735 / DSM 15497 / L2-TR).